Reading from the N-terminus, the 211-residue chain is UPF0637 protein BLi01683/BL05149 (211 aa).

The protein belongs to the UPF0637 family.

In Bacillus licheniformis (strain ATCC 14580 / DSM 13 / JCM 2505 / CCUG 7422 / NBRC 12200 / NCIMB 9375 / NCTC 10341 / NRRL NRS-1264 / Gibson 46), this protein is UPF0637 protein BLi01683/BL05149.